The sequence spans 189 residues: Flavin prenyltransferase UbiX (189 aa).

FMN-binding positions include 10–12 (GAS), Ser-36, 91–94 (STNT), and Arg-126. Dimethylallyl phosphate-binding residues include Tyr-156 and Lys-172.

It belongs to the UbiX/PAD1 family.

The catalysed reaction is dimethylallyl phosphate + FMNH2 = prenylated FMNH2 + phosphate. Its function is as follows. Flavin prenyltransferase that catalyzes the synthesis of the prenylated FMN cofactor (prenyl-FMN) for 4-hydroxy-3-polyprenylbenzoic acid decarboxylase UbiD. The prenyltransferase is metal-independent and links a dimethylallyl moiety from dimethylallyl monophosphate (DMAP) to the flavin N5 and C6 atoms of FMN. In Aquifex aeolicus (strain VF5), this protein is Flavin prenyltransferase UbiX.